A 300-amino-acid polypeptide reads, in one-letter code: Acetaldehyde dehydrogenase 3 (300 aa).

11-14 (SGNI) contributes to the NAD(+) binding site. Cys126 serves as the catalytic Acyl-thioester intermediate. Residues 157–165 (SAGPGTRAN) and Asn276 contribute to the NAD(+) site.

It belongs to the acetaldehyde dehydrogenase family.

The enzyme catalyses acetaldehyde + NAD(+) + CoA = acetyl-CoA + NADH + H(+). The chain is Acetaldehyde dehydrogenase 3 from Rhodococcus opacus (strain B4).